The following is a 385-amino-acid chain: Deoxyguanosinetriphosphate triphosphohydrolase-like protein (385 aa).

One can recognise an HD domain in the interval 75 to 197; the sequence is RLTHTLEVGQ…VDAADALAYT (123 aa).

It belongs to the dGTPase family. Type 2 subfamily.

This Deinococcus geothermalis (strain DSM 11300 / CIP 105573 / AG-3a) protein is Deoxyguanosinetriphosphate triphosphohydrolase-like protein.